The chain runs to 158 residues: Putative pre-16S rRNA nuclease (158 aa).

The tract at residues 138 to 158 (ELKPAQQTASRSGAGAGDGGS) is disordered.

This sequence belongs to the YqgF nuclease family.

It localises to the cytoplasm. In terms of biological role, could be a nuclease involved in processing of the 5'-end of pre-16S rRNA. This chain is Putative pre-16S rRNA nuclease, found in Synechococcus sp. (strain CC9605).